The sequence spans 421 residues: Elsinochrome C biosynthesis regulatory protein elcR (421 aa).

Positions 1–16 are enriched in polar residues; sequence MATQLPSPTATTSHSG. A disordered region spans residues 1 to 20; it reads MATQLPSPTATTSHSGNEPR. The segment at residues 27–54 is a DNA-binding region (zn(2)-C6 fungal-type); it reads CNNCSAQKIRCGKQRPACARCVNKKLQC.

It is found in the nucleus. Its function is as follows. Transcription regulator of the gene cluster that mediates the biosynthesis of elsinochrome C, a perelyenequinone phytotoxin structurally similar to cercosporin. This is Elsinochrome C biosynthesis regulatory protein elcR from Phaeosphaeria nodorum (strain SN15 / ATCC MYA-4574 / FGSC 10173) (Glume blotch fungus).